Reading from the N-terminus, the 352-residue chain is Biotin synthase (352 aa).

The region spanning 44–262 (NRVQVSTLLS…LAVARILMPQ (219 aa)) is the Radical SAM core domain. [4Fe-4S] cluster-binding residues include Cys-59, Cys-63, and Cys-66. Residues Cys-103, Cys-134, Cys-194, and Arg-266 each contribute to the [2Fe-2S] cluster site.

Belongs to the radical SAM superfamily. Biotin synthase family. Homodimer. It depends on [4Fe-4S] cluster as a cofactor. The cofactor is [2Fe-2S] cluster.

The catalysed reaction is (4R,5S)-dethiobiotin + (sulfur carrier)-SH + 2 reduced [2Fe-2S]-[ferredoxin] + 2 S-adenosyl-L-methionine = (sulfur carrier)-H + biotin + 2 5'-deoxyadenosine + 2 L-methionine + 2 oxidized [2Fe-2S]-[ferredoxin]. Its pathway is cofactor biosynthesis; biotin biosynthesis; biotin from 7,8-diaminononanoate: step 2/2. Functionally, catalyzes the conversion of dethiobiotin (DTB) to biotin by the insertion of a sulfur atom into dethiobiotin via a radical-based mechanism. The polypeptide is Biotin synthase (Pseudomonas syringae pv. tomato (strain ATCC BAA-871 / DC3000)).